Here is a 160-residue protein sequence, read N- to C-terminus: 2-C-methyl-D-erythritol 2,4-cyclodiphosphate synthase (160 aa).

Residues aspartate 11 and histidine 13 each contribute to the a divalent metal cation site. Residues 11 to 13 (DVH) and 37 to 38 (HS) contribute to the 4-CDP-2-C-methyl-D-erythritol 2-phosphate site. An a divalent metal cation-binding site is contributed by histidine 45. Residues 59-61 (DIG) and arginine 145 each bind 4-CDP-2-C-methyl-D-erythritol 2-phosphate.

This sequence belongs to the IspF family. Homotrimer. A divalent metal cation is required as a cofactor.

It catalyses the reaction 4-CDP-2-C-methyl-D-erythritol 2-phosphate = 2-C-methyl-D-erythritol 2,4-cyclic diphosphate + CMP. The protein operates within isoprenoid biosynthesis; isopentenyl diphosphate biosynthesis via DXP pathway; isopentenyl diphosphate from 1-deoxy-D-xylulose 5-phosphate: step 4/6. Involved in the biosynthesis of isopentenyl diphosphate (IPP) and dimethylallyl diphosphate (DMAPP), two major building blocks of isoprenoid compounds. Catalyzes the conversion of 4-diphosphocytidyl-2-C-methyl-D-erythritol 2-phosphate (CDP-ME2P) to 2-C-methyl-D-erythritol 2,4-cyclodiphosphate (ME-CPP) with a corresponding release of cytidine 5-monophosphate (CMP). The polypeptide is 2-C-methyl-D-erythritol 2,4-cyclodiphosphate synthase (Neisseria meningitidis serogroup B (strain ATCC BAA-335 / MC58)).